A 221-amino-acid chain; its full sequence is Lysine N-acyltransferase MbtK (221 aa).

Residues 1 to 34 (MSDAPAESAPAQIDPAQTDPAEQPVQILPRERSD) are disordered. Residue His141 participates in substrate binding. The active-site Proton acceptor is Asp179.

This sequence belongs to the lysine N-acyltransferase MbtK family. Monomer.

Its pathway is siderophore biosynthesis; mycobactin biosynthesis. In terms of biological role, acyltransferase required for the direct transfer of medium- to long-chain fatty acyl moieties from a carrier protein (MbtL) on to the epsilon-amino group of lysine residue in the mycobactin core. This is Lysine N-acyltransferase MbtK (mbtK) from Mycolicibacterium paratuberculosis (strain ATCC BAA-968 / K-10) (Mycobacterium paratuberculosis).